The primary structure comprises 552 residues: Serine palmitoyltransferase 3 (552 aa).

Residues 1-29 (MANPGGGAVCNGKLHNHKKQSNGSQSRNC) form a disordered region. Residues 59–79 (PLHVMVFTYMGYGIGTLFGYL) form a helical membrane-spanning segment. Lys371 carries the N6-(pyridoxal phosphate)lysine modification.

The protein belongs to the class-II pyridoxal-phosphate-dependent aminotransferase family. As to quaternary structure, component of the serine palmitoyltransferase (SPT) complex, which is composed of SPTLC1, SPTLC2 or SPTLC3 and SPTSSA or SPTSSB. The heterodimer consisting of SPTLC1 and SPTLC2/SPTLC3 forms the catalytic core of the enzyme, while SPTSSA or SPTSSB subunits determine substrate specificity. SPT also interacts with ORMDL proteins, especially ORMDL3, which negatively regulate SPT activity in the presence of ceramides. Pyridoxal 5'-phosphate is required as a cofactor. In terms of tissue distribution, expressed in most tissues, except peripheral blood cells and bone marrow, with highest levels in heart, kidney, liver, uterus and skin.

It is found in the endoplasmic reticulum membrane. It carries out the reaction L-serine + hexadecanoyl-CoA + H(+) = 3-oxosphinganine + CO2 + CoA. It catalyses the reaction dodecanoyl-CoA + L-serine + H(+) = 3-oxotetradecasphinganine + CO2 + CoA. The enzyme catalyses tetradecanoyl-CoA + L-serine + H(+) = 3-oxohexadecasphinganine + CO2 + CoA. The catalysed reaction is octadecanoyl-CoA + L-serine + H(+) = 3-oxoeicosasphinganine + CO2 + CoA. It functions in the pathway lipid metabolism; sphingolipid metabolism. Its activity is regulated as follows. SPT complex catalytic activity is negatively regulated by ORMDL proteins, including ORMDL3, in the presence of ceramides. This mechanism allows to maintain ceramide levels at sufficient concentrations for the production of complex sphingolipids, but which prevents the accumulation of ceramides to levels that trigger apoptosis. Its function is as follows. Component of the serine palmitoyltransferase multisubunit enzyme (SPT) that catalyzes the initial and rate-limiting step in sphingolipid biosynthesis by condensing L-serine and activated acyl-CoA (most commonly palmitoyl-CoA) to form long-chain bases. The SPT complex is composed of SPTLC1, SPTLC2 or SPTLC3 and SPTSSA or SPTSSB. Within this complex, the heterodimer consisting of SPTLC1 and SPTLC2/SPTLC3 forms the catalytic core. The composition of the serine palmitoyltransferase (SPT) complex determines the substrate preference. The SPTLC1-SPTLC2-SPTSSA complex shows a strong preference for C16-CoA substrate, while the SPTLC1-SPTLC3-SPTSSA isozyme uses both C14-CoA and C16-CoA as substrates, with a slight preference for C14-CoA. The SPTLC1-SPTLC2-SPTSSB complex shows a strong preference for C18-CoA substrate, while the SPTLC1-SPTLC3-SPTSSB isozyme displays an ability to use a broader range of acyl-CoAs, without apparent preference. The polypeptide is Serine palmitoyltransferase 3 (Homo sapiens (Human)).